The primary structure comprises 318 residues: Elongation factor Ts, mitochondrial (318 aa).

Residues 1 to 18 (MLLQRFFTRALHSTRQLY) constitute a mitochondrion transit peptide.

It belongs to the EF-Ts family.

The protein localises to the mitochondrion. Its function is as follows. Associates with the EF-Tu.GDP complex and induces the exchange of GDP to GTP. It remains bound to the aminoacyl-tRNA.EF-Tu.GTP complex up to the GTP hydrolysis stage on the ribosome. In Drosophila melanogaster (Fruit fly), this protein is Elongation factor Ts, mitochondrial.